The following is a 687-amino-acid chain: Chloride channel protein ClC-Ka (687 aa).

Transmembrane regions (helical) follow at residues 52-72 (FLMT…FAIG), 161-181 (LFLG…AYLG), 202-222 (VAAA…GVLF), and 236-256 (YWRG…LAVF). Ca(2+) is bound by residues E259, E261, D278, and E281. The next 6 membrane-spanning stretches (helical) occupy residues 282–302 (IFFF…YLFC), 329–349 (ALAT…HFLA), 396–416 (FTIF…LILA), 417–437 (TTIP…AAIG), 452–472 (IVTG…AGAA), and 486–506 (LLAF…MAVL). Residues 507–687 (AANAIAQSCQ…SNLTNPPAPK (181 aa)) lie on the Cytoplasmic side of the membrane. CBS domains follow at residues 551-609 (MNHS…EPPS) and 626-684 (CPTE…TNPP).

This sequence belongs to the chloride channel (TC 2.A.49) family. CLCNKA subfamily. As to quaternary structure, homodimer. Interacts with BSND.

The protein resides in the basolateral cell membrane. The catalysed reaction is chloride(in) = chloride(out). It catalyses the reaction bromide(in) = bromide(out). It carries out the reaction nitrate(in) = nitrate(out). The enzyme catalyses iodide(out) = iodide(in). Its activity is regulated as follows. Activated by extracellular Ca(2+) and inhibited by extracellular acidic pH. In terms of biological role, anion-selective channel permeable to small monovalent anions with ion selectivity for chloride &gt; bromide &gt; nitrate &gt; iodide. Forms a homodimeric channel where each subunit has its own ion conduction pathway. May conduct double-barreled currents controlled by two types of gates, two fast gates that control each subunit independently and a slow common gate that opens and shuts off both subunits simultaneously. Assembles with the regulatory subunit BSND/Barttin for sorting at the basolateral plasma membrane domain and functional switch to the ion conducting state. CLCNKA:BSND channels display mostly a linear current-voltage relationship with fast gating at negative potentials. Mediates transepithelial chloride transport from the lumen to interstitial compartment along the thin ascending limb of Henle's loop, contributing to generation of hypertonic medullary interstitium as a countercurrent system to achieve urine concentration. Conducts chloride currents in the stria vascularis of the inner ear to establish the endocochlear potential necessary for normal hearing. The protein is Chloride channel protein ClC-Ka of Homo sapiens (Human).